The primary structure comprises 82 residues: Probable tautomerase XF_1725 (82 aa).

P2 functions as the Proton acceptor; via imino nitrogen in the catalytic mechanism.

It belongs to the 4-oxalocrotonate tautomerase family.

The sequence is that of Probable tautomerase XF_1725 from Xylella fastidiosa (strain 9a5c).